The sequence spans 900 residues: Methionine--tRNA ligase, cytoplasmic (900 aa).

The GST C-terminal domain occupies 74 to 198; that stretch reads GWEQDDLTNQ…VLKQQGVLAL (125 aa). The short motif at 273–283 is the 'HIGH' region element; that stretch reads PYVNNVPHLGN. Positions 593–597 match the 'KMSKS' region motif; that stretch reads KFSKS. Position 596 (Lys596) interacts with ATP. A Phosphoserine modification is found at Ser825. Residue Thr835 is modified to Phosphothreonine. The WHEP-TRS domain occupies 841–897; sequence QIQALMDEVTKQGNIVRELKAQKADKNEVAAEVAKLLDLKKQLAVAEGKPPEAPKGK.

Belongs to the class-I aminoacyl-tRNA synthetase family. As to quaternary structure, monomer. Part of a multisubunit complex that groups tRNA ligases for Arg (RARS1), Asp (DARS1), Gln (QARS1), Ile (IARS1), Leu (LARS1), Lys (KARS1), Met (MARS1) the bifunctional ligase for Glu and Pro (EPRS1) and the auxiliary subunits AIMP1/p43, AIMP2/p38 and EEF1E1/p18. Forms a linear complex that contains MARS1, EEF1E1, EPRS1 and AIMP2 that is at the core of the multisubunit complex.

It is found in the cytoplasm. The protein resides in the cytosol. It localises to the nucleus. The protein localises to the nucleolus. It carries out the reaction tRNA(Met) + L-methionine + ATP = L-methionyl-tRNA(Met) + AMP + diphosphate. Its activity is regulated as follows. Enzyme activity is increased by spermidine, EEF1A1, and when the Mg(2+) concentration is increased from 5 mM to 13 mM (in vitro), possibly by promoting the dissociation of the complex between the enzyme and its product. Its function is as follows. Catalyzes the specific attachment of an amino acid to its cognate tRNA in a 2 step reaction: the amino acid (AA) is first activated by ATP to form AA-AMP and then transferred to the acceptor end of the tRNA. Plays a role in the synthesis of ribosomal RNA in the nucleolus. The chain is Methionine--tRNA ligase, cytoplasmic from Homo sapiens (Human).